We begin with the raw amino-acid sequence, 184 residues long: Threonylcarbamoyl-AMP synthase (184 aa).

The YrdC-like domain occupies 1–184 (MNNLENIVEQ…IFTQHIFRQG (184 aa)).

It belongs to the SUA5 family. TsaC subfamily.

The protein resides in the cytoplasm. The catalysed reaction is L-threonine + hydrogencarbonate + ATP = L-threonylcarbamoyladenylate + diphosphate + H2O. Required for the formation of a threonylcarbamoyl group on adenosine at position 37 (t(6)A37) in tRNAs that read codons beginning with adenine. Catalyzes the conversion of L-threonine, HCO(3)(-)/CO(2) and ATP to give threonylcarbamoyl-AMP (TC-AMP) as the acyladenylate intermediate, with the release of diphosphate. The protein is Threonylcarbamoyl-AMP synthase of Actinobacillus pleuropneumoniae serotype 5b (strain L20).